A 160-amino-acid chain; its full sequence is UPF0178 protein PSPA7_5991 (160 aa).

It belongs to the UPF0178 family.

The chain is UPF0178 protein PSPA7_5991 from Pseudomonas paraeruginosa (strain DSM 24068 / PA7) (Pseudomonas aeruginosa (strain PA7)).